The following is a 673-amino-acid chain: DNA ligase (673 aa).

Residues 33–37, 82–83, and glutamate 114 contribute to the NAD(+) site; these read DAEYD and SL. Lysine 116 serves as the catalytic N6-AMP-lysine intermediate. 4 residues coordinate NAD(+): arginine 137, glutamate 174, lysine 291, and lysine 315. Residues cysteine 409, cysteine 412, cysteine 427, and cysteine 433 each coordinate Zn(2+). Residues 592–673 form the BRCT domain; that stretch reads AQEQPLAGLV…LINLLEQHNG (82 aa).

The protein belongs to the NAD-dependent DNA ligase family. LigA subfamily. It depends on Mg(2+) as a cofactor. Requires Mn(2+) as cofactor.

It carries out the reaction NAD(+) + (deoxyribonucleotide)n-3'-hydroxyl + 5'-phospho-(deoxyribonucleotide)m = (deoxyribonucleotide)n+m + AMP + beta-nicotinamide D-nucleotide.. Functionally, DNA ligase that catalyzes the formation of phosphodiester linkages between 5'-phosphoryl and 3'-hydroxyl groups in double-stranded DNA using NAD as a coenzyme and as the energy source for the reaction. It is essential for DNA replication and repair of damaged DNA. The chain is DNA ligase from Pseudoalteromonas translucida (strain TAC 125).